The following is a 236-amino-acid chain: 2,3,4,5-tetrahydropyridine-2,6-dicarboxylate N-acetyltransferase (236 aa).

The protein belongs to the transferase hexapeptide repeat family. DapH subfamily.

It carries out the reaction (S)-2,3,4,5-tetrahydrodipicolinate + acetyl-CoA + H2O = L-2-acetamido-6-oxoheptanedioate + CoA. It participates in amino-acid biosynthesis; L-lysine biosynthesis via DAP pathway; LL-2,6-diaminopimelate from (S)-tetrahydrodipicolinate (acetylase route): step 1/3. Catalyzes the transfer of an acetyl group from acetyl-CoA to tetrahydrodipicolinate. This is 2,3,4,5-tetrahydropyridine-2,6-dicarboxylate N-acetyltransferase from Clostridium perfringens (strain ATCC 13124 / DSM 756 / JCM 1290 / NCIMB 6125 / NCTC 8237 / Type A).